The chain runs to 222 residues: Dual specificity phosphatase 29 (222 aa).

The Tyrosine-protein phosphatase domain maps to histidine 54 to glutamine 202. Histidine 146–arginine 153 contacts substrate. The Phosphocysteine intermediate role is filled by cysteine 147. Residues valine 201–proline 222 form a disordered region. Basic and acidic residues predominate over residues histidine 209–proline 222.

The protein belongs to the protein-tyrosine phosphatase family. Non-receptor class dual specificity subfamily. As to quaternary structure, homodimer. Interacts with PRKAA2.

The protein localises to the cytoplasm. It localises to the nucleus. It carries out the reaction O-phospho-L-tyrosyl-[protein] + H2O = L-tyrosyl-[protein] + phosphate. It catalyses the reaction O-phospho-L-seryl-[protein] + H2O = L-seryl-[protein] + phosphate. The catalysed reaction is O-phospho-L-threonyl-[protein] + H2O = L-threonyl-[protein] + phosphate. In terms of biological role, dual specificity phosphatase able to dephosphorylate phosphotyrosine, phosphoserine and phosphothreonine residues within the same substrate, with a preference for phosphotyrosine as a substrate. Involved in the modulation of intracellular signaling cascades. In skeletal muscle regulates systemic glucose homeostasis by activating, AMPK, an energy sensor protein kinase. Affects MAP kinase signaling though modulation of the MAPK1/2 cascade in skeletal muscle promoting muscle cell differentiation, development and atrophy. The protein is Dual specificity phosphatase 29 (DUSP29) of Sus scrofa (Pig).